Reading from the N-terminus, the 363-residue chain is Molybdenum import ATP-binding protein ModC (363 aa).

The region spanning 1 to 230 (MISARFSGRQ…PNLPLIHRPD (230 aa)) is the ABC transporter domain. ATP is bound at residue 31 to 38 (GPSGCGKT). Residues 289–359 (DTTILNALPA…LKAMALSAPA (71 aa)) enclose the Mop domain.

Belongs to the ABC transporter superfamily. Molybdate importer (TC 3.A.1.8) family. In terms of assembly, the complex is composed of two ATP-binding proteins (ModC), two transmembrane proteins (ModB) and a solute-binding protein (ModA).

The protein localises to the cell inner membrane. The catalysed reaction is molybdate(out) + ATP + H2O = molybdate(in) + ADP + phosphate + H(+). In terms of biological role, part of the ABC transporter complex ModABC involved in molybdenum import. Responsible for energy coupling to the transport system. The chain is Molybdenum import ATP-binding protein ModC from Rhodobacter capsulatus (Rhodopseudomonas capsulata).